We begin with the raw amino-acid sequence, 130 residues long: Small ribosomal subunit protein uS8 (130 aa).

Lysine 88 carries the post-translational modification N6-succinyllysine.

Belongs to the universal ribosomal protein uS8 family. In terms of assembly, component of the small ribosomal subunit. Part of the small subunit (SSU) processome, composed of more than 70 proteins and the RNA chaperone small nucleolar RNA (snoRNA) U3.

It localises to the cytoplasm. The protein resides in the nucleus. Its subcellular location is the nucleolus. Component of the small ribosomal subunit. The ribosome is a large ribonucleoprotein complex responsible for the synthesis of proteins in the cell. Part of the small subunit (SSU) processome, first precursor of the small eukaryotic ribosomal subunit. During the assembly of the SSU processome in the nucleolus, many ribosome biogenesis factors, an RNA chaperone and ribosomal proteins associate with the nascent pre-rRNA and work in concert to generate RNA folding, modifications, rearrangements and cleavage as well as targeted degradation of pre-ribosomal RNA by the RNA exosome. Required for proper erythropoiesis. The sequence is that of Small ribosomal subunit protein uS8 (Rps15a) from Mus musculus (Mouse).